The sequence spans 572 residues: Adenine deaminase (572 aa).

Belongs to the metallo-dependent hydrolases superfamily. Adenine deaminase family. It depends on Mn(2+) as a cofactor.

It carries out the reaction adenine + H2O + H(+) = hypoxanthine + NH4(+). The sequence is that of Adenine deaminase from Clostridium perfringens (strain 13 / Type A).